A 465-amino-acid polypeptide reads, in one-letter code: Chromosomal replication initiator protein DnaA (465 aa).

A domain I, interacts with DnaA modulators region spans residues 1 to 84 (MSLSLWQQCL…RFEVGSKPLV (84 aa)). The domain II stretch occupies residues 84–128 (VQTISQPAQSHHNPVSVARQQPVRMAPVRPSWDNSPVQAEHTYRS). The domain III, AAA+ region stretch occupies residues 129-345 (NVNPKHTFDN…GALNRVIANA (217 aa)). ATP contacts are provided by Gly173, Gly175, Lys176, and Thr177. The domain IV, binds dsDNA stretch occupies residues 346–465 (NFTGRSITID…FSNLIRTLSS (120 aa)).

The protein belongs to the DnaA family. Oligomerizes as a right-handed, spiral filament on DNA at oriC.

It is found in the cytoplasm. In terms of biological role, plays an essential role in the initiation and regulation of chromosomal replication. ATP-DnaA binds to the origin of replication (oriC) to initiate formation of the DNA replication initiation complex once per cell cycle. Binds the DnaA box (a 9 base pair repeat at the origin) and separates the double-stranded (ds)DNA. Forms a right-handed helical filament on oriC DNA; dsDNA binds to the exterior of the filament while single-stranded (ss)DNA is stabiized in the filament's interior. The ATP-DnaA-oriC complex binds and stabilizes one strand of the AT-rich DNA unwinding element (DUE), permitting loading of DNA polymerase. After initiation quickly degrades to an ADP-DnaA complex that is not apt for DNA replication. Binds acidic phospholipids. This is Chromosomal replication initiator protein DnaA from Pectobacterium atrosepticum (strain SCRI 1043 / ATCC BAA-672) (Erwinia carotovora subsp. atroseptica).